The primary structure comprises 75 residues: DNA-directed RNA polymerase subunit omega (75 aa).

It belongs to the RNA polymerase subunit omega family. In cyanobacteria the RNAP catalytic core is composed of 2 alpha, 1 beta, 1 beta', 1 gamma and 1 omega subunit. When a sigma factor is associated with the core the holoenzyme is formed, which can initiate transcription.

It carries out the reaction RNA(n) + a ribonucleoside 5'-triphosphate = RNA(n+1) + diphosphate. Its function is as follows. Promotes RNA polymerase assembly. Latches the N- and C-terminal regions of the beta' subunit thereby facilitating its interaction with the beta and alpha subunits. In Synechococcus sp. (strain CC9311), this protein is DNA-directed RNA polymerase subunit omega.